Here is a 181-residue protein sequence, read N- to C-terminus: Adenine phosphoribosyltransferase 1 (181 aa).

Belongs to the purine/pyrimidine phosphoribosyltransferase family. Homodimer.

The protein localises to the cytoplasm. The enzyme catalyses AMP + diphosphate = 5-phospho-alpha-D-ribose 1-diphosphate + adenine. It participates in purine metabolism; AMP biosynthesis via salvage pathway; AMP from adenine: step 1/1. In terms of biological role, catalyzes a salvage reaction resulting in the formation of AMP, that is energically less costly than de novo synthesis. In Triticum aestivum (Wheat), this protein is Adenine phosphoribosyltransferase 1 (APT1).